The sequence spans 274 residues: 3-methyl-2-oxobutanoate hydroxymethyltransferase (274 aa).

Residues D49 and D88 each coordinate Mg(2+). 3-methyl-2-oxobutanoate contacts are provided by residues 49–50, D88, and K118; that span reads DS. Residue E120 participates in Mg(2+) binding. E187 serves as the catalytic Proton acceptor.

This sequence belongs to the PanB family. Homodecamer; pentamer of dimers. Mg(2+) is required as a cofactor.

It is found in the cytoplasm. It carries out the reaction 3-methyl-2-oxobutanoate + (6R)-5,10-methylene-5,6,7,8-tetrahydrofolate + H2O = 2-dehydropantoate + (6S)-5,6,7,8-tetrahydrofolate. It functions in the pathway cofactor biosynthesis; (R)-pantothenate biosynthesis; (R)-pantoate from 3-methyl-2-oxobutanoate: step 1/2. Its function is as follows. Catalyzes the reversible reaction in which hydroxymethyl group from 5,10-methylenetetrahydrofolate is transferred onto alpha-ketoisovalerate to form ketopantoate. The protein is 3-methyl-2-oxobutanoate hydroxymethyltransferase of Rhodopseudomonas palustris (strain HaA2).